A 140-amino-acid chain; its full sequence is Relaxin-3 (140 aa).

Positions 1–23 are cleaved as a signal peptide; the sequence is MATRGLLLASWALLGALVLQAEA. 3 cysteine pairs are disulfide-bonded: cysteine 33–cysteine 127, cysteine 45–cysteine 140, and cysteine 126–cysteine 131. The propeptide at 53 to 116 is connecting peptide; that stretch reads ADILAHDPLG…GSPGVVRGSR (64 aa).

The protein belongs to the insulin family. As to quaternary structure, heterodimer of a B chain and an A chain linked by two disulfide bonds. In terms of tissue distribution, highly abundant expression is detected in neurons within the ventomedial dorsal tegmental nucleus and the laterally central gray alpha of the pons. Also detected at much lower levels within the hippocampus.

The protein localises to the secreted. Functionally, may play a role in neuropeptide signaling processes. Ligand for LGR7, relaxin-3 receptor-1 and relaxin-3 receptor-2. The chain is Relaxin-3 (Rln3) from Rattus norvegicus (Rat).